Consider the following 300-residue polypeptide: 4-hydroxy-tetrahydrodipicolinate synthase (300 aa).

Thr-55 provides a ligand contact to pyruvate. The Proton donor/acceptor role is filled by Tyr-143. Lys-171 functions as the Schiff-base intermediate with substrate in the catalytic mechanism. Ile-211 provides a ligand contact to pyruvate.

The protein belongs to the DapA family. Homotetramer; dimer of dimers.

The protein localises to the cytoplasm. The enzyme catalyses L-aspartate 4-semialdehyde + pyruvate = (2S,4S)-4-hydroxy-2,3,4,5-tetrahydrodipicolinate + H2O + H(+). The protein operates within amino-acid biosynthesis; L-lysine biosynthesis via DAP pathway; (S)-tetrahydrodipicolinate from L-aspartate: step 3/4. Its function is as follows. Catalyzes the condensation of (S)-aspartate-beta-semialdehyde [(S)-ASA] and pyruvate to 4-hydroxy-tetrahydrodipicolinate (HTPA). In Mycobacterium bovis (strain ATCC BAA-935 / AF2122/97), this protein is 4-hydroxy-tetrahydrodipicolinate synthase.